Reading from the N-terminus, the 342-residue chain is Anthranilate phosphoribosyltransferase (342 aa).

5-phospho-alpha-D-ribose 1-diphosphate is bound by residues G79, 82–83 (GD), T87, 89–92 (NVST), 107–115 (KHGNRAATS), and S119. Position 79 (G79) interacts with anthranilate. S91 serves as a coordination point for Mg(2+). An anthranilate-binding site is contributed by N110. Residue R165 coordinates anthranilate. Mg(2+) is bound by residues D224 and E225.

The protein belongs to the anthranilate phosphoribosyltransferase family. As to quaternary structure, homodimer. It depends on Mg(2+) as a cofactor.

The catalysed reaction is N-(5-phospho-beta-D-ribosyl)anthranilate + diphosphate = 5-phospho-alpha-D-ribose 1-diphosphate + anthranilate. Its pathway is amino-acid biosynthesis; L-tryptophan biosynthesis; L-tryptophan from chorismate: step 2/5. In terms of biological role, catalyzes the transfer of the phosphoribosyl group of 5-phosphorylribose-1-pyrophosphate (PRPP) to anthranilate to yield N-(5'-phosphoribosyl)-anthranilate (PRA). This is Anthranilate phosphoribosyltransferase from Rubrobacter xylanophilus (strain DSM 9941 / JCM 11954 / NBRC 16129 / PRD-1).